Reading from the N-terminus, the 169-residue chain is S-ribosylhomocysteine lyase (169 aa).

Positions 54, 58, and 128 each coordinate Fe cation.

The protein belongs to the LuxS family. In terms of assembly, homodimer. The cofactor is Fe cation.

It catalyses the reaction S-(5-deoxy-D-ribos-5-yl)-L-homocysteine = (S)-4,5-dihydroxypentane-2,3-dione + L-homocysteine. Functionally, involved in the synthesis of autoinducer 2 (AI-2) which is secreted by bacteria and is used to communicate both the cell density and the metabolic potential of the environment. The regulation of gene expression in response to changes in cell density is called quorum sensing. Catalyzes the transformation of S-ribosylhomocysteine (RHC) to homocysteine (HC) and 4,5-dihydroxy-2,3-pentadione (DPD). The chain is S-ribosylhomocysteine lyase from Shewanella loihica (strain ATCC BAA-1088 / PV-4).